The following is a 65-amino-acid chain: Large ribosomal subunit protein uL30 (65 aa).

This sequence belongs to the universal ribosomal protein uL30 family. In terms of assembly, part of the 50S ribosomal subunit.

This chain is Large ribosomal subunit protein uL30, found in Aster yellows witches'-broom phytoplasma (strain AYWB).